The chain runs to 283 residues: MNEKIAVVTDSTTYLPDEVKEQLRINVVPLSVIIDGKSYREGEELSATDFYRKVKEAENFPTSSQPAPGEFIHLFENLKEQGFDTVISIHLSSGISGTFQNAASAGELIEGLNVVAYDSELSCMAQGMFAVKAAEMALANEPLDQIIQKLDKIKQAQDAYFMVDDLNNLQRGGRLNGAQALVGSLLQIKPILHFNDKQIVLFEKVRTQKKALKRIEDILQKAVQNKTAEKAYVIHGNDLAKGEAWLAQLEAKFPEVTFELSYFGPVIGTHLGEGALGLTWSIK.

The DegV domain occupies 5–282; it reads IAVVTDSTTY…EGALGLTWSI (278 aa). Hexadecanoate-binding residues include S63 and S96.

May bind long-chain fatty acids, such as palmitate, and may play a role in lipid transport or fatty acid metabolism. This Listeria monocytogenes serovar 1/2a (strain ATCC BAA-679 / EGD-e) protein is DegV domain-containing protein lmo2514.